The sequence spans 430 residues: Ribosomal protein uS12 methylthiotransferase RimO (430 aa).

Residues 1–116 (MKIGIKVLGC…IAEAIEKATP (116 aa)) enclose the MTTase N-terminal domain. [4Fe-4S] cluster contacts are provided by C10, C46, C79, C146, C150, and C153. The Radical SAM core domain maps to 132-362 (SCNNSFAYVK…LIFQSQIAYE (231 aa)). The TRAM domain occupies 365 to 430 (KRFVGKNLNV…DEYDLKGELI (66 aa)).

Belongs to the methylthiotransferase family. RimO subfamily. The cofactor is [4Fe-4S] cluster.

The protein localises to the cytoplasm. It catalyses the reaction L-aspartate(89)-[ribosomal protein uS12]-hydrogen + (sulfur carrier)-SH + AH2 + 2 S-adenosyl-L-methionine = 3-methylsulfanyl-L-aspartate(89)-[ribosomal protein uS12]-hydrogen + (sulfur carrier)-H + 5'-deoxyadenosine + L-methionine + A + S-adenosyl-L-homocysteine + 2 H(+). Its function is as follows. Catalyzes the methylthiolation of an aspartic acid residue of ribosomal protein uS12. The chain is Ribosomal protein uS12 methylthiotransferase RimO from Pseudothermotoga lettingae (strain ATCC BAA-301 / DSM 14385 / NBRC 107922 / TMO) (Thermotoga lettingae).